Reading from the N-terminus, the 949-residue chain is Bifunctional uridylyltransferase/uridylyl-removing enzyme (949 aa).

The segment at Met-1–Pro-377 is uridylyltransferase. Positions Gly-378–Thr-733 are uridylyl-removing. The 117-residue stretch at Val-494–Leu-610 folds into the HD domain. 2 consecutive ACT domains span residues Glu-734–Ala-815 and Val-845–Pro-926. Positions Met-925–Thr-949 are disordered.

It belongs to the GlnD family. Mg(2+) serves as cofactor.

It catalyses the reaction [protein-PII]-L-tyrosine + UTP = [protein-PII]-uridylyl-L-tyrosine + diphosphate. The catalysed reaction is [protein-PII]-uridylyl-L-tyrosine + H2O = [protein-PII]-L-tyrosine + UMP + H(+). Uridylyltransferase (UTase) activity is inhibited by glutamine, while glutamine activates uridylyl-removing (UR) activity. Functionally, modifies, by uridylylation and deuridylylation, the PII regulatory proteins (GlnB and homologs), in response to the nitrogen status of the cell that GlnD senses through the glutamine level. Under low glutamine levels, catalyzes the conversion of the PII proteins and UTP to PII-UMP and PPi, while under higher glutamine levels, GlnD hydrolyzes PII-UMP to PII and UMP (deuridylylation). Thus, controls uridylylation state and activity of the PII proteins, and plays an important role in the regulation of nitrogen fixation and metabolism. In Sinorhizobium medicae (strain WSM419) (Ensifer medicae), this protein is Bifunctional uridylyltransferase/uridylyl-removing enzyme.